The primary structure comprises 727 residues: Non-structural protein 4 (727 aa).

Disordered stretches follow at residues M1–G38 and G671–K727. Polar residues predominate over residues R17 to G38. The segment covering S712–K727 has biased composition (basic residues).

This chain is Non-structural protein 4, found in Rice dwarf virus (isolate Fujian) (RDV).